The primary structure comprises 263 residues: tRNA (guanine-N(1)-)-methyltransferase (263 aa).

Residues G124 and 144-149 (LGDFVL) contribute to the S-adenosyl-L-methionine site.

Belongs to the RNA methyltransferase TrmD family. Homodimer.

The protein localises to the cytoplasm. It carries out the reaction guanosine(37) in tRNA + S-adenosyl-L-methionine = N(1)-methylguanosine(37) in tRNA + S-adenosyl-L-homocysteine + H(+). Functionally, specifically methylates guanosine-37 in various tRNAs. This chain is tRNA (guanine-N(1)-)-methyltransferase, found in Aromatoleum aromaticum (strain DSM 19018 / LMG 30748 / EbN1) (Azoarcus sp. (strain EbN1)).